The primary structure comprises 1209 residues: Neural cell adhesion molecule L1-like protein (1209 aa).

Residues 1 to 25 form the signal peptide; the sequence is MMELPLCGRGLILSLIFLLLKLSAA. Over 26 to 1083 the chain is Extracellular; it reads EIPLSVQQVP…LYDDISTQGW (1058 aa). Ig-like C2-type domains follow at residues 35–124 and 128–223; these read PTIV…EEIE and PGVP…MKLT. 2 disulfides stabilise this stretch: cysteine 57–cysteine 109 and cysteine 153–cysteine 204. Asparagine 87 carries an N-linked (GlcNAc...) asparagine glycan. N-linked (GlcNAc...) asparagine glycans are attached at residues asparagine 225 and asparagine 299. 4 consecutive Ig-like C2-type domains span residues 235–328, 331–417, 423–510, and 515–607; these read PKLL…VTVE, PRWK…ANID, PLIK…ANLD, and TKLR…TQVT. Intrachain disulfides connect cysteine 262/cysteine 310, cysteine 352/cysteine 401, cysteine 445/cysteine 494, and cysteine 536/cysteine 591. N-linked (GlcNAc...) asparagine glycosylation is present at asparagine 476. The DGEA motif lies at 555–558; sequence DGEA. Asparagine 562 and asparagine 580 each carry an N-linked (GlcNAc...) asparagine glycan. 4 Fibronectin type-III domains span residues 614-709, 714-807, 812-914, and 918-1015; these read PPGN…TPPA, NPQN…SGED, APVI…TPEG, and QPSF…LGEG. A disordered region spans residues 696 to 717; the sequence is HASLPSDHHETPPAAPDKNPQN. N-linked (GlcNAc...) asparagine glycans are attached at residues asparagine 767, asparagine 822, asparagine 945, and asparagine 1027. A helical transmembrane segment spans residues 1084-1104; sequence FIGLMCAIALLTLILLTICFV. At 1105-1209 the chain is on the cytoplasmic side; sequence KRNRGGKYSV…SSTATFPLRA (105 aa). The span at 1115 to 1133 shows a compositional bias: basic and acidic residues; sequence KEKEDLHPDPEVQSAKDET. Positions 1115–1170 are disordered; the sequence is KEKEDLHPDPEVQSAKDETFGEYSDSDEKPLKGSLRSLNRNMQPTESADSLVEYGE. Residues serine 1148, serine 1161, and serine 1181 each carry the phosphoserine modification. A compositionally biased stretch (polar residues) spans 1150–1162; the sequence is RSLNRNMQPTESA. Positions 1182–1186 match the FIG[AQ]Y motif; sequence FIGAY.

The protein belongs to the immunoglobulin superfamily. L1/neurofascin/NgCAM family. As to quaternary structure, may interact with L1CAM. May interact with ITGB1/ITGA1 heterodimer and ITGB1/ITGA2 heterodimer as well as with ANK3. Post-translationally, cleavage by metalloprotease ADAM8 in the extracellular part generates 2 soluble forms (125 kDa and 165 kDa) in vitro and is inhibited by metalloprotease inhibitors. In brain extracts, these two soluble forms are also present and are dramatically reduced in mice lacking ADAM8. Cleaved by BACE1. In terms of processing, N-glycosylated. Contains N-linked oligosaccharides with a sulfated carbohydrate structure type HNK-1 (SO4-3-GlcUABeta1,3GalBeta1,4GlcNAc). O-glycosylated. In terms of tissue distribution, expressed in the brain, in the cerebellum and in the spinal cord. Detected in the retina and the optic nerve. Expressed in neurons and glial cells in the central nervous system and by Schwann cells in the peripheral nervous system.

Its subcellular location is the cell membrane. It localises to the secreted. It is found in the extracellular space. The protein resides in the extracellular matrix. Functionally, extracellular matrix and cell adhesion protein that plays a role in nervous system development and in synaptic plasticity. Both soluble and membranous forms promote neurite outgrowth of cerebellar and hippocampal neurons and suppress neuronal cell death. Plays a role in neuronal positioning of pyramidal neurons as well as in regulation of both the number of interneurons and the efficacy of GABAergic synapses. May play a role in regulating cell migration in nerve regeneration and cortical development. Potentiates integrin-dependent cell migration towards extracellular matrix proteins. Recruits ANK3 to the plasma membrane. The protein is Neural cell adhesion molecule L1-like protein (Chl1) of Mus musculus (Mouse).